We begin with the raw amino-acid sequence, 441 residues long: Ribosomal protein uS12 methylthiotransferase RimO (441 aa).

The region spanning 7–117 is the MTTase N-terminal domain; that stretch reads PKISFVSLGC…VLEAVHRALP (111 aa). Residues C16, C52, C81, C148, C152, and C155 each coordinate [4Fe-4S] cluster. In terms of domain architecture, Radical SAM core spans 134 to 371; sequence LTPRHYAYLK…MARQQKISAR (238 aa). In terms of domain architecture, TRAM spans 374–440; the sequence is KRKVGTRQQV…AYDLHGTVAG (67 aa).

It belongs to the methylthiotransferase family. RimO subfamily. Requires [4Fe-4S] cluster as cofactor.

The protein localises to the cytoplasm. It carries out the reaction L-aspartate(89)-[ribosomal protein uS12]-hydrogen + (sulfur carrier)-SH + AH2 + 2 S-adenosyl-L-methionine = 3-methylsulfanyl-L-aspartate(89)-[ribosomal protein uS12]-hydrogen + (sulfur carrier)-H + 5'-deoxyadenosine + L-methionine + A + S-adenosyl-L-homocysteine + 2 H(+). In terms of biological role, catalyzes the methylthiolation of an aspartic acid residue of ribosomal protein uS12. In Rhodopseudomonas palustris (strain BisA53), this protein is Ribosomal protein uS12 methylthiotransferase RimO.